The primary structure comprises 569 residues: MSNKNKSYDYVIIGGGSAGSVLGNRLSEDKDKEVLVLEAGRSDYFWDLFIQMPAALMFPSGNKFYDWIYSTDEEPHMGGRKVAHARGKVLGGSSSINGMIYQRGNPMDYEGWAEPEGMETWDFAHCLPYFKKLEKTYGAAPYDKFRGHDGPIKLKRGPATNPLFQSFFDAGVEAGYHKTPDVNGFRQEGFGPFDSQVHRGRRMSASRAYLHPAMKRKNLTVETRAFVTEIHYEGRRATGVTYKKNGKLHTIDANEVILSGGAFNTPQLLQLSGIGDSEFLKSKGIEPRVHLPGVGENFEDHLEVYIQHKCKEPVSLQPSLDIKRMPFIGLQWIFTRTGAAASNHFEGGGFVRSNNEVDYPNLMFHFLPIAVRYDGQKAAVAHGYQVHVGPMYSNSRGSLKIKSKDPFEKPSIRFNYLSTEEDKKEWVEAIRVARNILSQKAMDPFNGGEISPGPEVQTDEEILDWVRRDGETALHPSCSAKMGPASDPMAVVDPLTMKVHGMENLRVVDASAMPRTTNGNIHAPVLMLAEKAADIIRGRKPLEPQYIDYYKHGVHDENEGAIEVKPYAK.

FAD is bound at residue 9–38; that stretch reads DYVIIGGGSAGSVLGNRLSEDKDKEVLVLE. The active-site Proton acceptor is His475.

This sequence belongs to the GMC oxidoreductase family. It depends on FAD as a cofactor.

The catalysed reaction is choline + A = betaine aldehyde + AH2. It carries out the reaction betaine aldehyde + NAD(+) + H2O = glycine betaine + NADH + 2 H(+). It functions in the pathway amine and polyamine biosynthesis; betaine biosynthesis via choline pathway; betaine aldehyde from choline (cytochrome c reductase route): step 1/1. Functionally, involved in the biosynthesis of the osmoprotectant glycine betaine. Catalyzes the oxidation of choline to betaine aldehyde and betaine aldehyde to glycine betaine at the same rate. The sequence is that of Oxygen-dependent choline dehydrogenase from Staphylococcus aureus (strain COL).